A 145-amino-acid chain; its full sequence is MASFATIAAVQPSAAVKGLGGSSLAGAKLFIKPSRQSFKTKSTRAGAVVAKYGDKSVYFDLEDLGNTTGQWDVYGSDAPSPYNPLQSKFFETFAAPFTKRGLLLKFLILGGGSLLTYVSANSTGDVLPIKRGPQEPPKLGPRGKL.

Residues 1 to 50 (MASFATIAAVQPSAAVKGLGGSSLAGAKLFIKPSRQSFKTKSTRAGAVVA) constitute a chloroplast transit peptide. Residues 102–118 (LLLKFLILGGGSLLTYV) traverse the membrane as a helical segment. The disordered stretch occupies residues 126-145 (VLPIKRGPQEPPKLGPRGKL).

It belongs to the psaH family.

The protein localises to the plastid. The protein resides in the chloroplast thylakoid membrane. In terms of biological role, possible role could be the docking of the LHC I antenna complex to the core complex. This is Photosystem I reaction center subunit VI-2, chloroplastic (PSAH2) from Arabidopsis thaliana (Mouse-ear cress).